The primary structure comprises 309 residues: Formate-nitrite transporter (309 aa).

The Cytoplasmic segment spans residues 1-19; that stretch reads MPPNNSKYVLDPVSIKSVC. An intramembrane region (helical) is located at residues 20–35; that stretch reads GGEESYIRCVEYGKKK. The Cytoplasmic portion of the chain corresponds to 36–40; that stretch reads AHYSN. A helical membrane pass occupies residues 41–68; it reads LNLLAKAILAGMFVGLCAHASGIAGGLF. The Extracellular segment spans residues 69 to 79; sequence YYHKLREIVGA. The helical transmembrane segment at 80-100 threads the bilayer; it reads SMSVFVYGFTFPIAFMCIICT. The Cytoplasmic segment spans residues 101-122; that stretch reads GSDLFTGNTLAVTMALYEKKVK. Residues 123-150 form a helical membrane-spanning segment; it reads LLDYLRVMTISLFGNYVGAVSFAFFVSY. Residues 151–163 are Extracellular-facing; it reads LSGAFTNVHAVEK. An intramembrane region (helical) is located at residues 164-179; the sequence is NHFFQFLNDIAEKKVH. The Extracellular segment spans residues 180–181; sequence HT. The helical transmembrane segment at 182–206 threads the bilayer; sequence FVECVSLAVGCNIFVCLAVYFVLTL. Topologically, residues 207-209 are cytoplasmic; sequence KDG. The helical transmembrane segment at 210 to 226 threads the bilayer; it reads AGYVFSVFFAVYAFAIA. Residues 227 to 249 lie on the Extracellular side of the membrane; that stretch reads GYEHIIANIYTLNIALMVNTKIT. A helical transmembrane segment spans residues 250–280; sequence VYQAYIKNLLPTLLGNYIAGAIVLGLPLYFI. Residues 281–309 are Cytoplasmic-facing; that stretch reads YKEHYYNFERSKRDNNDAQMKSLSIELRN.

Belongs to the FNT transporter (TC 1.A.16) family. Homopentamer.

It localises to the cell membrane. Its subcellular location is the vacuole membrane. It catalyses the reaction (S)-lactate(in) + H(+)(in) = (S)-lactate(out) + H(+)(out). The enzyme catalyses formate(in) + H(+)(in) = formate(out) + H(+)(out). It carries out the reaction pyruvate(out) + H(+)(out) = pyruvate(in) + H(+)(in). The catalysed reaction is acetate(out) + H(+)(out) = acetate(in) + H(+)(in). Its activity is regulated as follows. Inhibited by diethylpyrocarbonate (DEPC). Protonophores, such as 2,4-dinitrophenol and carbonylcyanide-3-chlorophenylhydrazone, abolish transport. Inhibited by phloretin, furosemide, alpha-cyano-4-hydroxy-cinnamate and alpha-fluorocinnamate. Inhibited by the Malaria Box compound MMV007839 and its derivatives BH296 and BH267.meta. Inhibited by the Malaria Box compound MMV000972. Inhibited by broad-specificity anion transport inhibitor NPPB. In terms of biological role, monocarboxylate-proton symporter that mediates the efflux of the waste product lactate in the intraerythrocytic parasites; active in acidic-to-neutral pH range. Transports L-lactate. Transports D-lactate, pyruvate, acetate and formate. Essential for asexual growth but dispensable for the development of gametocytes. The chain is Formate-nitrite transporter from Plasmodium falciparum (isolate 3D7).